The following is a 345-amino-acid chain: Proto-oncogene serine/threonine-protein kinase mos (345 aa).

Residues 63–344 (VCLLQRLGAG…LDLRALQAEL (282 aa)) enclose the Protein kinase domain. ATP is bound by residues 69-77 (LGAGGFGSV) and Lys90. The Proton acceptor role is filled by Asp202.

The protein belongs to the protein kinase superfamily. Ser/Thr protein kinase family. In terms of assembly, interacts with MAP2K1/MEK1. As to expression, restricted to gonadal tissues.

It is found in the cytoplasm. The enzyme catalyses L-seryl-[protein] + ATP = O-phospho-L-seryl-[protein] + ADP + H(+). The catalysed reaction is L-threonyl-[protein] + ATP = O-phospho-L-threonyl-[protein] + ADP + H(+). Its function is as follows. Serine/threonine kinase involved in the regulation of MAPK signaling. Is an activator of the ERK1/2 signaling cascade playing an essential role in the stimulation of oocyte maturation. The protein is Proto-oncogene serine/threonine-protein kinase mos of Sus scrofa (Pig).